A 372-amino-acid polypeptide reads, in one-letter code: Ciliary neurotrophic factor receptor subunit alpha (372 aa).

The signal sequence occupies residues 1 to 22 (MAAPVPWACCAVLAAAAAVVYA). In terms of domain architecture, Ig-like C2-type spans 27 to 104 (PQEAPHVQYE…WHLRHQVLLH (78 aa)). Cys-46 and Cys-89 are joined by a disulfide. 4 N-linked (GlcNAc...) asparagine glycosylation sites follow: Asn-60, Asn-70, Asn-142, and Asn-190. 2 Fibronectin type-III domains span residues 108 to 205 (PPRE…VKPD) and 206 to 306 (PPEN…TEEP). Positions 290 to 294 (WSDWS) match the WSXWS motif motif. Residues 301-340 (PWTEEPRHLTTEAQAAETTTSTTSSLAPPPTTKICDPGEL) form a disordered region. The segment covering 311–326 (TEAQAAETTTSTTSSL) has biased composition (low complexity). Ser-342 is lipidated: GPI-anchor amidated serine. The propeptide at 343-372 (GGGPSAPFLVSVPITLALAAAAATASSLLI) is removed in mature form.

Belongs to the type I cytokine receptor family. Type 3 subfamily. As to quaternary structure, forms a heterotrimer with LIFR and IL6ST. Interacts with heterodimeric neurotropic cytokine composed of CLCF1/CLC and CRLF1/CLF-1. Either alone or in complex with the heterodimer CLCF1-CRLF1 interacts with SORL1; this interaction may promote internalization and lysosomal degradation. Component of a receptor complex composed of IL6ST/GP130, IL27RA/WSX1 and CNTFR which interacts with the neuroprotective peptide humanin. In terms of tissue distribution, nervous system and skeletal muscle.

Its subcellular location is the cell membrane. Its function is as follows. Binds to CNTF. The alpha subunit provides the receptor specificity. Receptor for heterodimeric neurotropic cytokine composed of CLCF1/CLC and CRLF1/CLF-1. Acts as a receptor for the neuroprotective peptide humanin as part of a complex with IL6ST/GP130 and IL27RA/WSX1. This Homo sapiens (Human) protein is Ciliary neurotrophic factor receptor subunit alpha (CNTFR).